The sequence spans 549 residues: Cation/acetate symporter ActP (549 aa).

Transmembrane regions (helical) follow at residues 33-53, 77-97, 103-123, 148-168, 183-203, 206-226, 262-282, 303-323, 355-375, 404-424, 428-448, 464-484, and 493-513; these read WQAI…TYWA, LAIA…ALVF, GLIY…LIAE, ILSA…QMVG, IAVV…GMLA, WVQI…AFMV, ISAL…PHIL, GFMG…IMLV, LFLG…VAGL, VSKI…VLFE, IAFM…PIIL, GGWL…TIWV, and IFPY…GIWF.

Belongs to the sodium:solute symporter (SSF) (TC 2.A.21) family.

It localises to the cell inner membrane. In terms of biological role, transports acetate. The protein is Cation/acetate symporter ActP of Escherichia coli O6:K15:H31 (strain 536 / UPEC).